Consider the following 93-residue polypeptide: Large ribosomal subunit protein bL31B (93 aa).

The protein belongs to the bacterial ribosomal protein bL31 family. Type B subfamily. As to quaternary structure, part of the 50S ribosomal subunit.

The polypeptide is Large ribosomal subunit protein bL31B (Pseudomonas syringae pv. tomato (strain ATCC BAA-871 / DC3000)).